The sequence spans 439 residues: GlutamylGlutaminyl-tRNA synthetase (439 aa).

The 'HIGH' region motif lies at 6–16 (PSPTGDMHIGN). A 'KMSKS' region motif is present at residues 232-236 (KMSKR). Lys-235 provides a ligand contact to ATP.

Belongs to the class-I aminoacyl-tRNA synthetase family. Glutamate--tRNA ligase type 1 subfamily. Monomer.

The protein resides in the cytoplasm. The catalysed reaction is tRNA(Glu) + L-glutamate + ATP = L-glutamyl-tRNA(Gln) + AMP + diphosphate. Aminoacylates tRNA(Gln) with glutamate. Does not aminoacylate tRNA(Glu). This Helicobacter pylori (strain ATCC 700392 / 26695) (Campylobacter pylori) protein is GlutamylGlutaminyl-tRNA synthetase (gltX2).